Reading from the N-terminus, the 271-residue chain is tRNA pseudouridine synthase A (271 aa).

Asp56 acts as the Nucleophile in catalysis. Tyr120 provides a ligand contact to substrate.

It belongs to the tRNA pseudouridine synthase TruA family. As to quaternary structure, homodimer.

The enzyme catalyses uridine(38/39/40) in tRNA = pseudouridine(38/39/40) in tRNA. Functionally, formation of pseudouridine at positions 38, 39 and 40 in the anticodon stem and loop of transfer RNAs. This is tRNA pseudouridine synthase A from Janthinobacterium sp. (strain Marseille) (Minibacterium massiliensis).